Reading from the N-terminus, the 306-residue chain is MLQTHIPVMLSEVLKVLDPKGGEFYLDCTFGAGGYSKAILESCDCYVVALDRDPNVIKKAEEIKQNYVERFDFIATNFADSFAKLKEKQFDGIVLDLGVSSMQLDVADRGFSFLHDGPLDMRMSGQGFSAEEFVNTLEEKEIADIIYKYGNESFSRRIAKSIVEYRKTARIDSTGKLAEIVRSSIGFRKGKIDPATKTFQAIRIYINDELGELERFLMNVKNILKKDGRLVVVSFHSLEDMIIKNFFKENSEKPVARSKYAKDDIIIDPNKWLRIITNKALAPSDKEIRLNIRARSAKLRTAKKIL.

S-adenosyl-L-methionine is bound by residues 33 to 35 (GGY), Asp51, Phe82, Asp96, and Gln103.

Belongs to the methyltransferase superfamily. RsmH family.

It localises to the cytoplasm. It catalyses the reaction cytidine(1402) in 16S rRNA + S-adenosyl-L-methionine = N(4)-methylcytidine(1402) in 16S rRNA + S-adenosyl-L-homocysteine + H(+). Its function is as follows. Specifically methylates the N4 position of cytidine in position 1402 (C1402) of 16S rRNA. This Rickettsia akari (strain Hartford) protein is Ribosomal RNA small subunit methyltransferase H.